We begin with the raw amino-acid sequence, 282 residues long: MTNLPKVTVRDLAESGVHFGHKISRWNAKMAPYIYGVHQENRIHIIDLRKTLPLLQVAMKALYDVAFQGGRILFVGTKFQAFDIIASEAIRCGQYYVNHRWLGGMLTNWGTVSSSIKTLMQYEKILNDEDSILTKKELGNIEKKKQKLDKALGGIREMGAIPDILFIIDTNKEHIAVKEAKKLGIPIVAILDTNSDPDGITYLIPGNDDSRKSIELYCKLATDSILAGIESSLAKSGVKIDDIRGDEFIQEKEDGIVQTKRRRSKVYKEEEREVVTNEDESR.

Positions 260–282 are disordered; the sequence is KRRRSKVYKEEEREVVTNEDESR. Basic and acidic residues predominate over residues 266–282; sequence VYKEEEREVVTNEDESR.

Belongs to the universal ribosomal protein uS2 family.

The protein is Small ribosomal subunit protein uS2 of Wolbachia pipientis wMel.